The chain runs to 168 residues: Large ribosomal subunit protein uL10 (168 aa).

Belongs to the universal ribosomal protein uL10 family. Part of the ribosomal stalk of the 50S ribosomal subunit. The N-terminus interacts with L11 and the large rRNA to form the base of the stalk. The C-terminus forms an elongated spine to which L12 dimers bind in a sequential fashion forming a multimeric L10(L12)X complex.

Its function is as follows. Forms part of the ribosomal stalk, playing a central role in the interaction of the ribosome with GTP-bound translation factors. In Clostridium acetobutylicum (strain ATCC 824 / DSM 792 / JCM 1419 / IAM 19013 / LMG 5710 / NBRC 13948 / NRRL B-527 / VKM B-1787 / 2291 / W), this protein is Large ribosomal subunit protein uL10.